Here is a 705-residue protein sequence, read N- to C-terminus: Polyribonucleotide nucleotidyltransferase (705 aa).

Asp-486 and Asp-492 together coordinate Mg(2+). Residues 553-612 (PRIHTIRINPDKIKDVIGKGGSVIRALTEETGTTIEIEDDGTVKIAATDGEKAKFAIRRI) form the KH domain. One can recognise an S1 motif domain in the interval 622 to 690 (GRIYQGKVTR…RQGRVRLSIK (69 aa)).

Belongs to the polyribonucleotide nucleotidyltransferase family. Component of the RNA degradosome, which is a multiprotein complex involved in RNA processing and mRNA degradation. Mg(2+) is required as a cofactor.

The protein localises to the cytoplasm. The enzyme catalyses RNA(n+1) + phosphate = RNA(n) + a ribonucleoside 5'-diphosphate. In terms of biological role, involved in mRNA degradation. Catalyzes the phosphorolysis of single-stranded polyribonucleotides processively in the 3'- to 5'-direction. The polypeptide is Polyribonucleotide nucleotidyltransferase (Serratia proteamaculans (strain 568)).